Reading from the N-terminus, the 57-residue chain is Large ribosomal subunit protein bL32 (57 aa).

Residues 1 to 23 are disordered; sequence MAVPKKKTSKSKRDKRRATWRHK.

Belongs to the bacterial ribosomal protein bL32 family.

The protein is Large ribosomal subunit protein bL32 of Trichormus variabilis (strain ATCC 29413 / PCC 7937) (Anabaena variabilis).